The chain runs to 57 residues: uncharacterized protein (57 aa).

Positions 9–45 (NWQEEIRKIIIERVRREAKKRLLEETRKLRMEMKSSK) form a coiled coil.

This is an uncharacterized protein from Archaeoglobus fulgidus (strain ATCC 49558 / DSM 4304 / JCM 9628 / NBRC 100126 / VC-16).